Here is a 258-residue protein sequence, read N- to C-terminus: Acyl-[acyl-carrier-protein]--UDP-N-acetylglucosamine O-acyltransferase (258 aa).

This sequence belongs to the transferase hexapeptide repeat family. LpxA subfamily. Homotrimer.

The protein localises to the cytoplasm. It carries out the reaction a (3R)-hydroxyacyl-[ACP] + UDP-N-acetyl-alpha-D-glucosamine = a UDP-3-O-[(3R)-3-hydroxyacyl]-N-acetyl-alpha-D-glucosamine + holo-[ACP]. It participates in glycolipid biosynthesis; lipid IV(A) biosynthesis; lipid IV(A) from (3R)-3-hydroxytetradecanoyl-[acyl-carrier-protein] and UDP-N-acetyl-alpha-D-glucosamine: step 1/6. Functionally, involved in the biosynthesis of lipid A, a phosphorylated glycolipid that anchors the lipopolysaccharide to the outer membrane of the cell. This Halorhodospira halophila (strain DSM 244 / SL1) (Ectothiorhodospira halophila (strain DSM 244 / SL1)) protein is Acyl-[acyl-carrier-protein]--UDP-N-acetylglucosamine O-acyltransferase.